The chain runs to 73 residues: Large ribosomal subunit protein bL31 (73 aa).

It belongs to the bacterial ribosomal protein bL31 family. Type A subfamily. As to quaternary structure, part of the 50S ribosomal subunit.

Binds the 23S rRNA. This chain is Large ribosomal subunit protein bL31, found in Brucella abortus (strain 2308).